Here is a 536-residue protein sequence, read N- to C-terminus: Chorismate synthase (536 aa).

His17 is a catalytic residue. Positions 37 to 59 (EDVQPQLNRRRPGQGPLSTQRRE) are disordered. His104 is an active-site residue. Residues 344 to 377 (ERDGCSAATLSRERASDGRTTSRHEEEVERGRER) form a disordered region. Residues 354–377 (SRERASDGRTTSRHEEEVERGRER) are compositionally biased toward basic and acidic residues. The active site involves Asp489.

Belongs to the chorismate synthase family. FMNH2 is required as a cofactor.

The catalysed reaction is 5-O-(1-carboxyvinyl)-3-phosphoshikimate = chorismate + phosphate. The enzyme catalyses FMNH2 + NADP(+) = FMN + NADPH + 2 H(+). It functions in the pathway metabolic intermediate biosynthesis; chorismate biosynthesis; chorismate from D-erythrose 4-phosphate and phosphoenolpyruvate: step 7/7. Its function is as follows. Bifunctional chorismate synthase and flavin reductase. Catalyzes the conversion of 5-enolpyruvylshikimate 3-phosphate (EPSP) to form chorismate. Acts also as a flavin reductase (FR) able to generate reduced flavin mononucleotide in the presence of NADPH. The sequence is that of Chorismate synthase (AROC) from Toxoplasma gondii.